The sequence spans 62 residues: UPF0434 protein ASA_1553 (62 aa).

The protein belongs to the UPF0434 family.

This chain is UPF0434 protein ASA_1553, found in Aeromonas salmonicida (strain A449).